The chain runs to 438 residues: Serine hydroxymethyltransferase (438 aa).

(6S)-5,6,7,8-tetrahydrofolate is bound by residues Leu-133 and 137 to 139 (GHL). An N6-(pyridoxal phosphate)lysine modification is found at Lys-242.

It belongs to the SHMT family. Homodimer. Pyridoxal 5'-phosphate serves as cofactor.

Its subcellular location is the cytoplasm. It carries out the reaction (6R)-5,10-methylene-5,6,7,8-tetrahydrofolate + glycine + H2O = (6S)-5,6,7,8-tetrahydrofolate + L-serine. The protein operates within one-carbon metabolism; tetrahydrofolate interconversion. Its pathway is amino-acid biosynthesis; glycine biosynthesis; glycine from L-serine: step 1/1. In terms of biological role, catalyzes the reversible interconversion of serine and glycine with tetrahydrofolate (THF) serving as the one-carbon carrier. This reaction serves as the major source of one-carbon groups required for the biosynthesis of purines, thymidylate, methionine, and other important biomolecules. Also exhibits THF-independent aldolase activity toward beta-hydroxyamino acids, producing glycine and aldehydes, via a retro-aldol mechanism. The polypeptide is Serine hydroxymethyltransferase (Brucella canis (strain ATCC 23365 / NCTC 10854 / RM-666)).